Here is a 359-residue protein sequence, read N- to C-terminus: Phospho-N-acetylmuramoyl-pentapeptide-transferase (359 aa).

Transmembrane regions (helical) follow at residues 3 to 23, 55 to 75, 80 to 100, 117 to 137, 156 to 176, 187 to 207, 231 to 251, 255 to 275, 280 to 300, and 334 to 354; these read QIMI…PALI, VAIL…GLAF, ITAS…VGFL, TAKT…VLQF, IATV…VVSA, LDGL…LITF, LALI…WNAA, IFMG…LSVT, ILAV…VLQI, and FWLL…GEWL.

It belongs to the glycosyltransferase 4 family. MraY subfamily. Mg(2+) serves as cofactor.

The protein localises to the cell membrane. It carries out the reaction UDP-N-acetyl-alpha-D-muramoyl-L-alanyl-gamma-D-glutamyl-meso-2,6-diaminopimeloyl-D-alanyl-D-alanine + di-trans,octa-cis-undecaprenyl phosphate = di-trans,octa-cis-undecaprenyl diphospho-N-acetyl-alpha-D-muramoyl-L-alanyl-D-glutamyl-meso-2,6-diaminopimeloyl-D-alanyl-D-alanine + UMP. Its pathway is cell wall biogenesis; peptidoglycan biosynthesis. Catalyzes the initial step of the lipid cycle reactions in the biosynthesis of the cell wall peptidoglycan: transfers peptidoglycan precursor phospho-MurNAc-pentapeptide from UDP-MurNAc-pentapeptide onto the lipid carrier undecaprenyl phosphate, yielding undecaprenyl-pyrophosphoryl-MurNAc-pentapeptide, known as lipid I. The chain is Phospho-N-acetylmuramoyl-pentapeptide-transferase from Mycobacterium ulcerans (strain Agy99).